A 723-amino-acid polypeptide reads, in one-letter code: Ribosome quality control complex subunit 1 (723 aa).

Residues 21 to 125 (SNSNANKMTS…DKGSDDDDDD (105 aa)) form a disordered region. Residues 27–37 (KMTSGKSTAGN) show a composition bias toward polar residues. The span at 93–108 (SSRRKKNKKAKRKQKN) shows a compositional bias: basic residues. Basic and acidic residues predominate over residues 109–118 (HTAEAAKDKG). Ser-119 bears the Phosphoserine mark. Residue Thr-158 is modified to Phosphothreonine. The residue at position 160 (Ser-160) is a Phosphoserine.

This sequence belongs to the TCF25 family. In terms of assembly, component of the ribosome quality control complex (RQC), composed of the E3 ubiquitin ligase RKR1/LTN1, RQC1 and RQC2, as well as CDC48 and its ubiquitin-binding cofactors. RQC forms a stable complex with 60S ribosomal subunits.

It localises to the cytoplasm. Component of the ribosome quality control complex (RQC), a ribosome-associated complex that mediates ubiquitination and extraction of incompletely synthesized nascent chains for proteasomal degradation. Within the RQC complex, RQC1 is essential for the recruitment of CDC48 to incompletely synthesized nascent polypeptides that are ubiquitinated by RKR1/LTN1. The sequence is that of Ribosome quality control complex subunit 1 from Saccharomyces cerevisiae (strain ATCC 204508 / S288c) (Baker's yeast).